Here is a 651-residue protein sequence, read N- to C-terminus: Far upstream element-binding protein 1 (651 aa).

Disordered stretches follow at residues 1-24 (MADY…GVVN) and 40-92 (KIGG…HQQQ). The residue at position 2 (alanine 2) is an N-acetylalanine. 2 positions are modified to phosphoserine: serine 48 and serine 51. The span at 61-73 (RPLEDGDQPDAKK) shows a compositional bias: basic and acidic residues. KH domains follow at residues 96–160 (VMTE…KRLL), 181–247 (NAVQ…KEMV), and 271–335 (NEGI…AEII). Serine 136 carries the post-translational modification Phosphoserine. Threonine 149 is subject to Phosphothreonine. Arginine 317, arginine 355, arginine 357, and arginine 359 each carry omega-N-methylarginine. One can recognise a KH 4 domain in the interval 372-439 (LQEFNFIVPT…QQIDYARQLI (68 aa)). Serine 411 carries the post-translational modification Phosphoserine. The residue at position 428 (threonine 428) is a Phosphothreonine. Disordered regions lie at residues 443-528 (IGGP…GADP), 545-574 (AQPP…APAG), and 625-651 (TSPQ…HHLY). Over residues 464-501 (PHGPPGPPGPGTPMGPYNPAPYNPGPPGPAPHGPPAPY) the composition is skewed to pro residues. Low complexity-rich tracts occupy residues 514-528 (QQQA…GADP) and 552-574 (PAGA…APAG). Residue serine 626 is modified to Phosphoserine.

Found in a complex with PUF60 and far upstream element (FUSE) DNA segment. Interacts with PUF60 and JTV1. In terms of processing, ubiquitinated. This targets the protein for proteasome-mediated degradation.

The protein localises to the nucleus. Its function is as follows. Regulates MYC expression by binding to a single-stranded far-upstream element (FUSE) upstream of the MYC promoter. May act both as activator and repressor of transcription. The polypeptide is Far upstream element-binding protein 1 (Fubp1) (Mus musculus (Mouse)).